We begin with the raw amino-acid sequence, 238 residues long: Phosphatidylcholine synthase (238 aa).

Topologically, residues 1 to 16 are cytoplasmic; it reads MPVNLSMTPINKAKAW. Residues 17 to 37 form a helical membrane-spanning segment; the sequence is GVHAVTASGVILALLALLALV. Residues 38–41 are Periplasmic-facing; the sequence is DNKP. Residues 42 to 62 traverse the membrane as a helical segment; it reads QACLLWLGLALLVDGLDGTLA. The Cytoplasmic portion of the chain corresponds to 63 to 75; it reads RKYEVKEMLPHFD. A helical membrane pass occupies residues 76 to 96; the sequence is GSVLDLVIDYLTYVFIPAIFI. Residues 97-104 lie on the Periplasmic side of the membrane; that stretch reads YRYIPLPE. The chain crosses the membrane as a helical span at residues 105–125; it reads HFELLAVGVILVSSLFCFCNV. Residues 126–132 lie on the Cytoplasmic side of the membrane; it reads NMKSTDN. The chain crosses the membrane as a helical span at residues 133 to 153; it reads YFVGFPAAWNVVAVYFYVLDL. The Periplasmic portion of the chain corresponds to 154–155; it reads HP. Residues 156–176 form a helical membrane-spanning segment; sequence WVNLATVLVLAALTLTRMKFL. The Cytoplasmic segment spans residues 177–183; sequence HPFRVRQ. Residues 184 to 204 form a helical membrane-spanning segment; the sequence is FMPLNIAVTFVWLISSGLLIV. The Periplasmic portion of the chain corresponds to 205–209; that stretch reads QQPAD. Residues 210–230 form a helical membrane-spanning segment; the sequence is LPILLGLWFAASAYFVGICLW. Over 231–238 the chain is Cytoplasmic; the sequence is RSAREWFG.

This sequence belongs to the CDP-alcohol phosphatidyltransferase class-I family. It depends on Mn(2+) as a cofactor.

The protein resides in the cell inner membrane. It catalyses the reaction a CDP-1,2-diacyl-sn-glycerol + choline = a 1,2-diacyl-sn-glycero-3-phosphocholine + CMP + H(+). Its function is as follows. Condenses choline with CDP-diglyceride to produce phosphatidylcholine and CMP. The chain is Phosphatidylcholine synthase from Pseudomonas aeruginosa (strain ATCC 15692 / DSM 22644 / CIP 104116 / JCM 14847 / LMG 12228 / 1C / PRS 101 / PAO1).